A 454-amino-acid chain; its full sequence is Flavonoid 3-O-glucosyltransferase (454 aa).

T25 lines the UDP pocket. H26 serves as the catalytic Proton acceptor. A myricetin-binding site is contributed by R89. The active-site Charge relay is D124. Positions 155, 192, and 202 each coordinate myricetin. UDP-binding residues include S282, S308, W334, and A335. The UDP-alpha-D-glucose site is built by A335, Q337, H352, W355, N356, S357, and E360. Residue H352 coordinates UDP. Residues N356, S357, and E360 each contribute to the UDP site. G375 is a binding site for myricetin. UDP-alpha-D-glucose-binding residues include D376 and Q377.

Belongs to the UDP-glycosyltransferase family. In terms of tissue distribution, highly expressed in flower buds, flowers and pods. Lower expression in leaves, petioles and stems.

It functions in the pathway secondary metabolite biosynthesis; flavonoid biosynthesis. Functionally, catalyzes the glycosylation of flavonoids at the 3-O-position. Glycosylates the 7-O-position if the 3-O-position is not available. Also able to perform 3-O-glycosylation of anthocyanidins. In Medicago truncatula (Barrel medic), this protein is Flavonoid 3-O-glucosyltransferase (UGT78G1).